We begin with the raw amino-acid sequence, 384 residues long: Putative glycosyltransferase EpsF (384 aa).

This sequence belongs to the glycosyltransferase group 1 family. Glycosyltransferase 4 subfamily.

Functionally, may be involved in the production of the exopolysaccharide (EPS) component of the extracellular matrix during biofilm formation. EPS is responsible for the adhesion of chains of cells into bundles. Required for biofilm maintenance. This Bacillus subtilis (strain 168) protein is Putative glycosyltransferase EpsF (epsF).